A 171-amino-acid chain; its full sequence is S-ribosylhomocysteine lyase (171 aa).

The Fe cation site is built by His54, His58, and Cys128.

It belongs to the LuxS family. In terms of assembly, homodimer. Fe cation is required as a cofactor.

The catalysed reaction is S-(5-deoxy-D-ribos-5-yl)-L-homocysteine = (S)-4,5-dihydroxypentane-2,3-dione + L-homocysteine. Involved in the synthesis of autoinducer 2 (AI-2) which is secreted by bacteria and is used to communicate both the cell density and the metabolic potential of the environment. The regulation of gene expression in response to changes in cell density is called quorum sensing. Catalyzes the transformation of S-ribosylhomocysteine (RHC) to homocysteine (HC) and 4,5-dihydroxy-2,3-pentadione (DPD). This chain is S-ribosylhomocysteine lyase, found in Pectobacterium atrosepticum (strain SCRI 1043 / ATCC BAA-672) (Erwinia carotovora subsp. atroseptica).